The chain runs to 4717 residues: Midasin (4717 aa).

AAA-ATPase protomer regions lie at residues 149-384, 458-797, 871-1131, 1157-1448, 1552-1811, and 1858-2106; these read LVQK…FGAF, EQLA…GLRR, EHYI…QEVI, SLKE…NACE, VLRA…EVFD, and VLES…FLLK. ATP is bound by residues 159–166 and 474–481; these read GPEGIGKK and GETGTGKT. Position 593 is a phosphoserine (Ser593). ATP contacts are provided by residues 901-908, 1193-1200, 1566-1573, and 1876-1883; these read GPTSSGKT, GDTGCGKT, GSPGVGKT, and GDTATGKT. Positions 2173 to 3925 are linker; the sequence is KLLRKVLLTN…SGVGAEDITN (1753 aa). Disordered stretches follow at residues 3898–3924, 3936–4283, and 4295–4365; these read PQEG…EDIT, LANE…LGDH, and EWED…EVGD. Acidic residues-rich tracts occupy residues 3936-3950 and 3973-3993; these read LANE…DLDE and ENSD…DIPE. Residues 4020-4030 are compositionally biased toward polar residues; the sequence is NEQSAANNESD. Residues 4031-4049 are compositionally biased toward basic and acidic residues; that stretch reads LVSKEDDNKALEDKDRQEK. The span at 4050–4066 shows a compositional bias: acidic residues; that stretch reads EDEEEMSDDVGIDDEIQ. Over residues 4080 to 4103 the composition is skewed to basic and acidic residues; the sequence is NEDHLDLPEDLKLDEKEGDVSKDS. Composition is skewed to acidic residues over residues 4104–4177, 4184–4196, and 4226–4236; these read DLED…ESTE, EELE…EDQA, and ENEELGEEDGA. Basic and acidic residues-rich tracts occupy residues 4258 to 4275 and 4329 to 4342; these read QKGE…EADR and AEKD…RDES. Residues 4343–4355 are compositionally biased toward polar residues; sequence ANQNPDSMNSTNI. One can recognise a VWFA domain in the interval 4505-4707; it reads QVMISIDDSK…ELPQLLSSAL (203 aa).

It belongs to the midasin family. In terms of assembly, associates with pre-60S ribosomes in the nucleoplasm.

It localises to the nucleus. Its subcellular location is the nucleolus. The protein localises to the nucleoplasm. Functionally, nuclear chaperone required for maturation and nuclear export of pre-60S ribosome subunits. Functions at successive maturation steps to remove ribosomal factors at critical transition points, first driving the exit of early pre-60S particles from the nucleolus and then driving late pre-60S particles from the nucleus. The protein is Midasin (mdn1) of Schizosaccharomyces pombe (strain 972 / ATCC 24843) (Fission yeast).